The chain runs to 364 residues: Probable dual-specificity RNA methyltransferase RlmN (364 aa).

Glu106 (proton acceptor) is an active-site residue. The 239-residue stretch at 112–350 (YPRRNTVCIS…SCTVRDTRGR (239 aa)) folds into the Radical SAM core domain. A disulfide bond links Cys119 and Cys356. Residues Cys126, Cys130, and Cys133 each contribute to the [4Fe-4S] cluster site. S-adenosyl-L-methionine contacts are provided by residues 177 to 178 (GE), Ser211, 234 to 236 (SLH), and Asn313. Cys356 (S-methylcysteine intermediate) is an active-site residue.

The protein belongs to the radical SAM superfamily. RlmN family. Requires [4Fe-4S] cluster as cofactor.

It is found in the cytoplasm. The catalysed reaction is adenosine(2503) in 23S rRNA + 2 reduced [2Fe-2S]-[ferredoxin] + 2 S-adenosyl-L-methionine = 2-methyladenosine(2503) in 23S rRNA + 5'-deoxyadenosine + L-methionine + 2 oxidized [2Fe-2S]-[ferredoxin] + S-adenosyl-L-homocysteine. It carries out the reaction adenosine(37) in tRNA + 2 reduced [2Fe-2S]-[ferredoxin] + 2 S-adenosyl-L-methionine = 2-methyladenosine(37) in tRNA + 5'-deoxyadenosine + L-methionine + 2 oxidized [2Fe-2S]-[ferredoxin] + S-adenosyl-L-homocysteine. Its function is as follows. Specifically methylates position 2 of adenine 2503 in 23S rRNA and position 2 of adenine 37 in tRNAs. In Mycobacterium bovis (strain ATCC BAA-935 / AF2122/97), this protein is Probable dual-specificity RNA methyltransferase RlmN.